The primary structure comprises 152 residues: Interleukin-1 family member 10 (152 aa).

The protein belongs to the IL-1 family. In terms of assembly, interacts with cargo receptor TMED10; the interaction mediates the translocation from the cytoplasm into the ERGIC (endoplasmic reticulum-Golgi intermediate compartment) and thereby secretion. As to expression, expressed in fetal skin, spleen and tonsil. Expressed mostly in the basal epithelia of skin and in proliferating B-cells of the tonsil.

The protein resides in the cytoplasm. The protein localises to the secreted. Its function is as follows. Cytokine with immunomodulatory activity. Alone, does not induce cytokine production, but reduces IL22 and IL17A production by T-cells in response to heat-killed Candida albicans. Reduces IL36G-induced production of IL8 by peripheral blood mononuclear cells. Increases IL6 production by dendritic cells stimulated by bacterial lipopolysaccharides (LPS). Ligand for IL-36R/IL1RL2. The polypeptide is Interleukin-1 family member 10 (Homo sapiens (Human)).